The primary structure comprises 163 residues: Phosphopantetheine adenylyltransferase (163 aa).

Position 10 (S10) interacts with substrate. ATP-binding positions include S10 to F11 and H18. 3 residues coordinate substrate: K42, L78, and K92. Residues G93–R95, E103, and H127–S133 each bind ATP.

Belongs to the bacterial CoaD family. In terms of assembly, homohexamer. The cofactor is Mg(2+).

It is found in the cytoplasm. It catalyses the reaction (R)-4'-phosphopantetheine + ATP + H(+) = 3'-dephospho-CoA + diphosphate. The protein operates within cofactor biosynthesis; coenzyme A biosynthesis; CoA from (R)-pantothenate: step 4/5. Functionally, reversibly transfers an adenylyl group from ATP to 4'-phosphopantetheine, yielding dephospho-CoA (dPCoA) and pyrophosphate. The protein is Phosphopantetheine adenylyltransferase of Clavibacter michiganensis subsp. michiganensis (strain NCPPB 382).